The primary structure comprises 429 residues: E3 ubiquitin-protein ligase ZNRF4 (429 aa).

An N-terminal signal peptide occupies residues 1–27 (MLRCRPEPLMPRATRVAVAVSLPLSHA). Topologically, residues 28-250 (VIPTQLPSHP…PPCRDLDCHP (223 aa)) are lumenal. The segment at 30–64 (PTQLPSHPGHRPSGRPRRCPKAPCLPSPVGLSSTQ) is disordered. A compositionally biased stretch (basic residues) spans 37 to 49 (PGHRPSGRPRRCP). N-linked (GlcNAc...) asparagine glycosylation occurs at asparagine 152. The region spanning 152–223 (NRSLGAIALI…VGEAASQDLR (72 aa)) is the PA domain. The helical transmembrane segment at 251–271 (VLTVSWALGRTLALVVSTLFV) threads the bilayer. Residues 272–429 (LNRLWLWAQA…SPAPPEAPGQ (158 aa)) lie on the Cytoplasmic side of the membrane. The segment at 309-352 (CAICLDEYEEGDQLKILPCSHTYHCKCIDPWFSQAPRRSCPVCK) adopts an RING-type; atypical zinc-finger fold. Disordered stretches follow at residues 358-381 (TEDS…GHRP) and 409-429 (TTSL…APGQ). Over residues 409–420 (TTSLEAEDTTVS) the composition is skewed to polar residues.

In terms of assembly, interacts with CANX.

It is found in the endoplasmic reticulum membrane. It carries out the reaction S-ubiquitinyl-[E2 ubiquitin-conjugating enzyme]-L-cysteine + [acceptor protein]-L-lysine = [E2 ubiquitin-conjugating enzyme]-L-cysteine + N(6)-ubiquitinyl-[acceptor protein]-L-lysine.. Its pathway is protein modification; protein ubiquitination. In terms of biological role, E3 ubiquitin-protein ligase that acts as a negative regulator of NOD2 signaling by mediating ubiquitination and degradation of RIPK2. Also catalyzes ubiquitination and proteasomal degradation of CANX within the endoplasmic reticulum. Could have a role in spermatogenesis. The protein is E3 ubiquitin-protein ligase ZNRF4 (ZNRF4) of Macaca fascicularis (Crab-eating macaque).